The following is a 316-amino-acid chain: 4-hydroxy-3-methylbut-2-enyl diphosphate reductase (316 aa).

Cys-12 is a [4Fe-4S] cluster binding site. (2E)-4-hydroxy-3-methylbut-2-enyl diphosphate contacts are provided by His-41 and His-74. Residues His-41 and His-74 each contribute to the dimethylallyl diphosphate site. Positions 41 and 74 each coordinate isopentenyl diphosphate. Residue Cys-96 participates in [4Fe-4S] cluster binding. His-124 is a binding site for (2E)-4-hydroxy-3-methylbut-2-enyl diphosphate. Position 124 (His-124) interacts with dimethylallyl diphosphate. His-124 contributes to the isopentenyl diphosphate binding site. The active-site Proton donor is the Glu-126. Thr-169 serves as a coordination point for (2E)-4-hydroxy-3-methylbut-2-enyl diphosphate. Position 199 (Cys-199) interacts with [4Fe-4S] cluster. Ser-227, Ser-228, Asn-229, and Ser-271 together coordinate (2E)-4-hydroxy-3-methylbut-2-enyl diphosphate. 4 residues coordinate dimethylallyl diphosphate: Ser-227, Ser-228, Asn-229, and Ser-271. 4 residues coordinate isopentenyl diphosphate: Ser-227, Ser-228, Asn-229, and Ser-271.

This sequence belongs to the IspH family. [4Fe-4S] cluster is required as a cofactor.

It catalyses the reaction isopentenyl diphosphate + 2 oxidized [2Fe-2S]-[ferredoxin] + H2O = (2E)-4-hydroxy-3-methylbut-2-enyl diphosphate + 2 reduced [2Fe-2S]-[ferredoxin] + 2 H(+). The enzyme catalyses dimethylallyl diphosphate + 2 oxidized [2Fe-2S]-[ferredoxin] + H2O = (2E)-4-hydroxy-3-methylbut-2-enyl diphosphate + 2 reduced [2Fe-2S]-[ferredoxin] + 2 H(+). The protein operates within isoprenoid biosynthesis; dimethylallyl diphosphate biosynthesis; dimethylallyl diphosphate from (2E)-4-hydroxy-3-methylbutenyl diphosphate: step 1/1. It participates in isoprenoid biosynthesis; isopentenyl diphosphate biosynthesis via DXP pathway; isopentenyl diphosphate from 1-deoxy-D-xylulose 5-phosphate: step 6/6. In terms of biological role, catalyzes the conversion of 1-hydroxy-2-methyl-2-(E)-butenyl 4-diphosphate (HMBPP) into a mixture of isopentenyl diphosphate (IPP) and dimethylallyl diphosphate (DMAPP). Acts in the terminal step of the DOXP/MEP pathway for isoprenoid precursor biosynthesis. The sequence is that of 4-hydroxy-3-methylbut-2-enyl diphosphate reductase from Xylella fastidiosa (strain M12).